The primary structure comprises 424 residues: Otefin (424 aa).

The LEM domain maps to 1–30 (MADVDDFDSLSNAELRAKMLAQGLPNIPVT). Residues 1-50 (MADVDDFDSLSNAELRAKMLAQGLPNIPVTDSSRKVLVKRLRASIGGQAS) are required for binding to Med and germline stem cell maintenance. The interval 42–186 (RASIGGQASP…SSKRADREEN (145 aa)) is disordered. Phosphoserine occurs at positions 44, 50, and 54. Thr63 is subject to Phosphothreonine. Positions 65-80 (APAPGAPSAPAAASTP) are enriched in low complexity. The Nuclear localization signal signature appears at 92–99 (ATKARRTI). Over residues 103–133 (EAKEPVRRLPEEAIRRRPDEADRLRSEEPVA) the composition is skewed to basic and acidic residues. A Phosphoserine modification is found at Ser152. Basic and acidic residues predominate over residues 157–170 (SERKVVEPLRKPET). A phosphoserine mark is found at Ser192 and Ser198. The segment at 259–278 (PSVPSARAQTTSSTRSYDYA) is disordered. A compositionally biased stretch (low complexity) spans 262 to 274 (PSARAQTTSSTRS). A required for binding to Med region spans residues 271-400 (STRSYDYASN…NRWLNSLEQK (130 aa)). Ser321 bears the Phosphoserine mark. Thr324 carries the phosphothreonine modification. Phosphoserine is present on Ser326. Position 358 is a phosphothreonine (Thr358). A phosphoserine mark is found at Ser378 and Ser385. Positions 400-424 (KYHIKSKLFIVLLVLLLIGVYYIFY) are essential for nuclear membrane localization and germline stem cell maintenance. The essential for nuclear membrane localization stretch occupies residues 406 to 424 (KLFIVLLVLLLIGVYYIFY).

Interacts with Med. Interacts with Lam. Interacts with aurA, alphaTub84B, gammaTub23C and gammaTub37C. Interacts with Nemp. Phosphorylation at Thr-63 by aurA may be required for exit from mitosis. May be phosphorylated by Cdk1 and Pka-C1. As to expression, expressed in all cell types of the germarium and testis. Expressed in nurse cells, follicle cells and oocytes.

It is found in the nucleus inner membrane. Its subcellular location is the nucleus. The protein localises to the nucleoplasm. The protein resides in the cytoplasm. It localises to the chromosome. It is found in the cytoskeleton. Its subcellular location is the spindle pole. The protein localises to the microtubule organizing center. The protein resides in the centrosome. Its function is as follows. Inner nuclear membrane protein. Involved in the attachment of membrane vesicles to chromatin during nuclear assembly, and is probably required for centrosome maturation and cell cycle progression during mitosis. Essential for differentiation of certain tissues and the maintenance of progenitor cell populations. Required for the differentiation and maintenance of male and female germline stem cells (GSCs), as well as the maintenance of somatic cells in the GSC niche. This role is likely to be independent of the BMP (Dpp) pathway that negatively regulates bam transcription during GSC differentiation. During development, plays essential and redundant functions with the other LEM domain proteins; bocks and MAN1. Also has a redundant but important role with bocks during larval development. The polypeptide is Otefin (Drosophila melanogaster (Fruit fly)).